The sequence spans 93 residues: Cell division topological specificity factor (93 aa).

Belongs to the MinE family.

In terms of biological role, prevents the cell division inhibition by proteins MinC and MinD at internal division sites while permitting inhibition at polar sites. This ensures cell division at the proper site by restricting the formation of a division septum at the midpoint of the long axis of the cell. In Alkaliphilus oremlandii (strain OhILAs) (Clostridium oremlandii (strain OhILAs)), this protein is Cell division topological specificity factor.